Here is a 425-residue protein sequence, read N- to C-terminus: Serine hydroxymethyltransferase (425 aa).

A (6S)-5,6,7,8-tetrahydrofolate-binding site is contributed by 132-134 (GHL). An N6-(pyridoxal phosphate)lysine modification is found at Lys-237.

Belongs to the SHMT family. Homodimer. Pyridoxal 5'-phosphate is required as a cofactor.

The protein localises to the cytoplasm. It carries out the reaction (6R)-5,10-methylene-5,6,7,8-tetrahydrofolate + glycine + H2O = (6S)-5,6,7,8-tetrahydrofolate + L-serine. The protein operates within one-carbon metabolism; tetrahydrofolate interconversion. Its pathway is amino-acid biosynthesis; glycine biosynthesis; glycine from L-serine: step 1/1. Catalyzes the reversible interconversion of serine and glycine with tetrahydrofolate (THF) serving as the one-carbon carrier. This reaction serves as the major source of one-carbon groups required for the biosynthesis of purines, thymidylate, methionine, and other important biomolecules. Also exhibits THF-independent aldolase activity toward beta-hydroxyamino acids, producing glycine and aldehydes, via a retro-aldol mechanism. The polypeptide is Serine hydroxymethyltransferase (Wolbachia sp. subsp. Brugia malayi (strain TRS)).